A 193-amino-acid polypeptide reads, in one-letter code: Crossover junction endodeoxyribonuclease RuvC (193 aa).

Residues D7, E68, and D141 contribute to the active site. D7, E68, and D141 together coordinate Mg(2+). Positions 174 to 193 (RQWAQATQHATRRRGVRRGM) are disordered. Over residues 183 to 193 (ATRRRGVRRGM) the composition is skewed to basic residues.

It belongs to the RuvC family. As to quaternary structure, homodimer which binds Holliday junction (HJ) DNA. The HJ becomes 2-fold symmetrical on binding to RuvC with unstacked arms; it has a different conformation from HJ DNA in complex with RuvA. In the full resolvosome a probable DNA-RuvA(4)-RuvB(12)-RuvC(2) complex forms which resolves the HJ. Mg(2+) is required as a cofactor.

It is found in the cytoplasm. The catalysed reaction is Endonucleolytic cleavage at a junction such as a reciprocal single-stranded crossover between two homologous DNA duplexes (Holliday junction).. In terms of biological role, the RuvA-RuvB-RuvC complex processes Holliday junction (HJ) DNA during genetic recombination and DNA repair. Endonuclease that resolves HJ intermediates. Cleaves cruciform DNA by making single-stranded nicks across the HJ at symmetrical positions within the homologous arms, yielding a 5'-phosphate and a 3'-hydroxyl group; requires a central core of homology in the junction. The consensus cleavage sequence is 5'-(A/T)TT(C/G)-3'. Cleavage occurs on the 3'-side of the TT dinucleotide at the point of strand exchange. HJ branch migration catalyzed by RuvA-RuvB allows RuvC to scan DNA until it finds its consensus sequence, where it cleaves and resolves the cruciform DNA. This Bifidobacterium animalis subsp. lactis (strain AD011) protein is Crossover junction endodeoxyribonuclease RuvC.